We begin with the raw amino-acid sequence, 218 residues long: 23 kDa integral membrane protein (218 aa).

Residues 1–12 lie on the Cytoplasmic side of the membrane; the sequence is MATLGTGMRCLK. The helical transmembrane segment at 13–36 threads the bilayer; the sequence is SCVFVLNIICLLCSLVLIGAGAYV. Topologically, residues 37–55 are extracellular; the sequence is EVKFSQYGDNLHKVWQAAP. A helical membrane pass occupies residues 56–71; it reads IAIIVVGVIILIVSFL. The Cytoplasmic segment spans residues 72–82; the sequence is GCCGAIKENVC. The helical transmembrane segment at 83 to 108 threads the bilayer; that stretch reads MLYMYAFFLVVLLIAELAAAIVAVVY. At 109–183 the chain is on the extracellular side; the sequence is KDRIDSEIDA…SVFGAFLKRN (75 aa). The N-linked (GlcNAc...) asparagine glycan is linked to N165. The chain crosses the membrane as a helical span at residues 184-205; the sequence is LVIVACVAFGVCFFQLLSIVIA. Topologically, residues 206–218 are cytoplasmic; the sequence is CCLGRQIKEYENV.

It belongs to the tetraspanin (TM4SF) family.

Its subcellular location is the membrane. The protein is 23 kDa integral membrane protein of Schistosoma mansoni (Blood fluke).